Consider the following 514-residue polypeptide: 23S rRNA (uracil(1939)-C(5))-methyltransferase RlmD (514 aa).

The [4Fe-4S] cluster site is built by cysteine 70, cysteine 76, cysteine 79, and cysteine 158. 6 residues coordinate S-adenosyl-L-methionine: glutamine 272, phenylalanine 301, asparagine 306, glutamate 322, asparagine 350, and aspartate 371. Cysteine 398 functions as the Nucleophile in the catalytic mechanism.

This sequence belongs to the class I-like SAM-binding methyltransferase superfamily. RNA M5U methyltransferase family. RlmD subfamily.

It carries out the reaction uridine(1939) in 23S rRNA + S-adenosyl-L-methionine = 5-methyluridine(1939) in 23S rRNA + S-adenosyl-L-homocysteine + H(+). Its function is as follows. Catalyzes the formation of 5-methyl-uridine at position 1939 (m5U1939) in 23S rRNA. This Chromobacterium violaceum (strain ATCC 12472 / DSM 30191 / JCM 1249 / CCUG 213 / NBRC 12614 / NCIMB 9131 / NCTC 9757 / MK) protein is 23S rRNA (uracil(1939)-C(5))-methyltransferase RlmD.